A 520-amino-acid polypeptide reads, in one-letter code: Putative cytochrome P450 CYP13A5 (520 aa).

C464 contributes to the heme binding site.

It belongs to the cytochrome P450 family. Heme serves as cofactor.

Cytochromes P450 are a group of heme-thiolate monooxygenases. They oxidize a variety of structurally unrelated compounds, including steroids, fatty acids, and xenobiotics. The protein is Putative cytochrome P450 CYP13A5 (cyp-13A5) of Caenorhabditis elegans.